Here is a 159-residue protein sequence, read N- to C-terminus: Ribosomal RNA large subunit methyltransferase H (159 aa).

Residues Leu-76, Gly-108, and 127-132 (FGLLTL) contribute to the S-adenosyl-L-methionine site.

The protein belongs to the RNA methyltransferase RlmH family. As to quaternary structure, homodimer.

It localises to the cytoplasm. It catalyses the reaction pseudouridine(1915) in 23S rRNA + S-adenosyl-L-methionine = N(3)-methylpseudouridine(1915) in 23S rRNA + S-adenosyl-L-homocysteine + H(+). In terms of biological role, specifically methylates the pseudouridine at position 1915 (m3Psi1915) in 23S rRNA. The sequence is that of Ribosomal RNA large subunit methyltransferase H from Streptococcus pyogenes serotype M5 (strain Manfredo).